The sequence spans 209 residues: MNEELTSLTEYQRYGHDYAKYPRRIAEELQRYGGNSFANFFRDEGVLYKEILCDACDHLDINYNERSATSLIEQNMLSKLLKDSLEKMSGREIKELCDGLGMPNIDKVIGENKQVLIASVLTLFKAGGSHSYALAVAVADAMVRQTLGHGLSSVVGKVALKKTLDILAGPIGWVITGALVSINLAGPAYRVTVPACVLVATLRKKLKAE.

It belongs to the UPF0174 family.

In Helicobacter pylori (strain J99 / ATCC 700824) (Campylobacter pylori J99), this protein is UPF0174 protein jhp_1493.